The following is a 314-amino-acid chain: Porphobilinogen deaminase (314 aa).

S-(dipyrrolylmethanemethyl)cysteine is present on cysteine 249.

The protein belongs to the HMBS family. Monomer. The cofactor is dipyrromethane.

The enzyme catalyses 4 porphobilinogen + H2O = hydroxymethylbilane + 4 NH4(+). Its pathway is porphyrin-containing compound metabolism; protoporphyrin-IX biosynthesis; coproporphyrinogen-III from 5-aminolevulinate: step 2/4. Functionally, tetrapolymerization of the monopyrrole PBG into the hydroxymethylbilane pre-uroporphyrinogen in several discrete steps. In Brucella suis biovar 1 (strain 1330), this protein is Porphobilinogen deaminase.